We begin with the raw amino-acid sequence, 513 residues long: Secreted LysM effector Vd6LysM (513 aa).

The signal sequence occupies residues 1 to 19 (MSFIKSLLLAAAAVASVSA). LysM domains follow at residues 38–85 (SYWV…SYCV), 136–182 (KFHW…NVCV), 219–265 (KFHW…QVCV), and 302–348 (KFHW…QVCV). Residues 357-367 (TTTRPPTTTAP) are compositionally biased toward low complexity. The tract at residues 357–377 (TTTRPPTTTAPGNGVSTPQPT) is disordered. LysM domains are found at residues 387–433 (KFHW…NVCV) and 465–511 (KFHW…NVCV).

It belongs to the secreted LysM effector family.

Its function is as follows. Might have a role in sequestration of chitin oligosaccharides (breakdown products of fungal cell walls that are released during invasion and act as triggers of host immunity) to dampen host defense. Does not play an important role during host colonization. This Verticillium dahliae (strain VdLs.17 / ATCC MYA-4575 / FGSC 10137) (Verticillium wilt) protein is Secreted LysM effector Vd6LysM.